The sequence spans 108 residues: Nucleoid-associated protein CHAB381_0200 (108 aa).

It belongs to the YbaB/EbfC family. As to quaternary structure, homodimer.

The protein localises to the cytoplasm. The protein resides in the nucleoid. Its function is as follows. Binds to DNA and alters its conformation. May be involved in regulation of gene expression, nucleoid organization and DNA protection. This is Nucleoid-associated protein CHAB381_0200 from Campylobacter hominis (strain ATCC BAA-381 / DSM 21671 / CCUG 45161 / LMG 19568 / NCTC 13146 / CH001A).